Reading from the N-terminus, the 2312-residue chain is Protein Ycf2 (2312 aa).

1630–1637 (GSIGTGRS) provides a ligand contact to ATP.

This sequence belongs to the Ycf2 family.

It is found in the plastid. Its subcellular location is the chloroplast stroma. Its function is as follows. Probable ATPase of unknown function. Its presence in a non-photosynthetic plant (Epifagus virginiana) and experiments in tobacco indicate that it has an essential function which is probably not related to photosynthesis. In Manihot esculenta (Cassava), this protein is Protein Ycf2.